A 274-amino-acid polypeptide reads, in one-letter code: Thymidylate synthase (274 aa).

Arg21 lines the dUMP pocket. His51 serves as a coordination point for (6R)-5,10-methylene-5,6,7,8-tetrahydrofolate. Residue 123 to 124 (RR) coordinates dUMP. Cys156 (nucleophile) is an active-site residue. DUMP contacts are provided by residues 176 to 179 (RSAD), Asn187, and 217 to 219 (HIY). Asp179 contacts (6R)-5,10-methylene-5,6,7,8-tetrahydrofolate. Ser273 is a binding site for (6R)-5,10-methylene-5,6,7,8-tetrahydrofolate.

This sequence belongs to the thymidylate synthase family. Bacterial-type ThyA subfamily. Homodimer.

Its subcellular location is the cytoplasm. The enzyme catalyses dUMP + (6R)-5,10-methylene-5,6,7,8-tetrahydrofolate = 7,8-dihydrofolate + dTMP. It participates in pyrimidine metabolism; dTTP biosynthesis. Functionally, catalyzes the reductive methylation of 2'-deoxyuridine-5'-monophosphate (dUMP) to 2'-deoxythymidine-5'-monophosphate (dTMP) while utilizing 5,10-methylenetetrahydrofolate (mTHF) as the methyl donor and reductant in the reaction, yielding dihydrofolate (DHF) as a by-product. This enzymatic reaction provides an intracellular de novo source of dTMP, an essential precursor for DNA biosynthesis. The polypeptide is Thymidylate synthase (Francisella tularensis subsp. holarctica (strain FTNF002-00 / FTA)).